Here is a 266-residue protein sequence, read N- to C-terminus: Streptomycin 3''-kinase (266 aa).

The Proton acceptor role is filled by D154.

Belongs to the aminoglycoside phosphotransferase family.

The catalysed reaction is streptomycin + ATP = streptomycin 3''-phosphate + ADP + H(+). Its function is as follows. The aminoglycoside phosphotransferases achieve inactivation of their antibiotic substrates by phosphorylation. In Klebsiella pneumoniae, this protein is Streptomycin 3''-kinase (str).